The primary structure comprises 207 residues: Ribosomal RNA small subunit methyltransferase G (207 aa).

Residues Gly-73, Leu-78, 124–125 (VE), and Arg-139 contribute to the S-adenosyl-L-methionine site.

It belongs to the methyltransferase superfamily. RNA methyltransferase RsmG family.

It is found in the cytoplasm. It catalyses the reaction guanosine(527) in 16S rRNA + S-adenosyl-L-methionine = N(7)-methylguanosine(527) in 16S rRNA + S-adenosyl-L-homocysteine. In terms of biological role, specifically methylates the N7 position of guanine in position 527 of 16S rRNA. This is Ribosomal RNA small subunit methyltransferase G from Salmonella choleraesuis (strain SC-B67).